Reading from the N-terminus, the 497-residue chain is MSMKLEISFAPSALIEAGLVLSLKEAEATLPAGAATVDPSGIFAKAAATAKFKAKAMSVLDILAPTGSQADRLIVIGAGKAADLVDHDWLRLGGVAAANLKGSEAVTVFLDADGLTITAEGVRDFAIGMLLRAYSFDDYKTKKKDDDDKAPSAVQITLVTAVADAAERLFAAEGRAVVDGVLLARNLVNLPANVLGPVEFADRAKALEALGVEVEILTETEMASLGMGALLGVAQGSVRPPRLAVMQWKGGAPEGQPIAFIGKGVVFDTGGISIKPAGGMEDMKGDMGGAAAVIGLMHTLAARKAKVNAIGILGLVENMPDGNAQRPGDIVTSMSGQTIEVINTDAEGRLVLCDALWYCNDRFKPAFMINLATLTGAILVALANLHAGLFSNDDTLAENLLKAGLSTNERLWRMPLGKDYDKLIDSKFADMKNTGGRYGGSITAAQFLKRFVGDTPWAHLDIAGTAMASPKDEINQSWASGFGVRLLDQLVRDAYEA.

Lys-263 and Asp-268 together coordinate Mn(2+). Lys-275 is a catalytic residue. Mn(2+) contacts are provided by Asp-286, Asp-345, and Glu-347. Arg-349 is an active-site residue.

Belongs to the peptidase M17 family. Requires Mn(2+) as cofactor.

The protein localises to the cytoplasm. The catalysed reaction is Release of an N-terminal amino acid, Xaa-|-Yaa-, in which Xaa is preferably Leu, but may be other amino acids including Pro although not Arg or Lys, and Yaa may be Pro. Amino acid amides and methyl esters are also readily hydrolyzed, but rates on arylamides are exceedingly low.. The enzyme catalyses Release of an N-terminal amino acid, preferentially leucine, but not glutamic or aspartic acids.. Functionally, presumably involved in the processing and regular turnover of intracellular proteins. Catalyzes the removal of unsubstituted N-terminal amino acids from various peptides. The sequence is that of Probable cytosol aminopeptidase from Allorhizobium ampelinum (strain ATCC BAA-846 / DSM 112012 / S4) (Agrobacterium vitis (strain S4)).